Here is a 152-residue protein sequence, read N- to C-terminus: Sec-independent protein translocase protein TatB (152 aa).

The chain crosses the membrane as a helical span at residues 1 to 21 (MLDVGFGELFCFGIIALLVLG).

This sequence belongs to the TatB family. As to quaternary structure, the Tat system comprises two distinct complexes: a TatABC complex, containing multiple copies of TatA, TatB and TatC subunits, and a separate TatA complex, containing only TatA subunits. Substrates initially bind to the TatABC complex, which probably triggers association of the separate TatA complex to form the active translocon.

The protein localises to the cell inner membrane. Its function is as follows. Part of the twin-arginine translocation (Tat) system that transports large folded proteins containing a characteristic twin-arginine motif in their signal peptide across membranes. Together with TatC, TatB is part of a receptor directly interacting with Tat signal peptides. TatB may form an oligomeric binding site that transiently accommodates folded Tat precursor proteins before their translocation. The polypeptide is Sec-independent protein translocase protein TatB (Acinetobacter baylyi (strain ATCC 33305 / BD413 / ADP1)).